A 427-amino-acid chain; its full sequence is MELNLKMDRSKELFEESKKYLVGGVNSPVRSFKPFPFFVKSAKDCFLYDEDGNEFIDYCLAYGPMVLGHANENILNAVKSQMDLGTAYGVPSEKEITLAKEVINRIPCAEMVRFVNSGTEATMGAIRLARGVTGRDKIIKFEGAFHGAHDYVLVKTGSGALTHGAPNSPGIPEDTTKNTLLIPFNDEDAVRKVISENKDEIACIILEPVMGNVGCILPQDGYLQFLREITEENGILLIFDEVITGFRLSKGGAQEYFGIKSDLATIGKILGGGFPIGAITGKKEYMEQFSPSGQIYQAGTFNGNPVSVTAGIETLKNLDDKFYKETTKKADILSNFLRETAEKYNVSTKVYNVASIFQIYFNEKEVVTYEDAKSSDTEKFMRYFYTLLENGVFVAPSQFECCFTSIKHNDEVLEKTMNAIDIAMKKL.

Residue K268 is modified to N6-(pyridoxal phosphate)lysine.

This sequence belongs to the class-III pyridoxal-phosphate-dependent aminotransferase family. HemL subfamily. It depends on pyridoxal 5'-phosphate as a cofactor.

The protein localises to the cytoplasm. It catalyses the reaction (S)-4-amino-5-oxopentanoate = 5-aminolevulinate. Its pathway is porphyrin-containing compound metabolism; protoporphyrin-IX biosynthesis; 5-aminolevulinate from L-glutamyl-tRNA(Glu): step 2/2. The sequence is that of Glutamate-1-semialdehyde 2,1-aminomutase from Methanococcus maripaludis (strain C5 / ATCC BAA-1333).